The chain runs to 274 residues: WIMGHMVNAIEQVDEFLNLGANAIELDIDFDKDGIAQITHHGIPCDCGRECTKKAIFTEYLDNIRQVTTPDNPKFREQLVLLALDLKLQRISSAKAYRAGEDVAKKLLDHYWQRGNSRARAYILLNIPLVEDCEFIRAFKDTLKNEGYESYNDKVGINFTGNEDLDKIRDVLEILGIHKQVWQADGITSCFARGTERLKEALEKRDTPGYNYINKVYAWTLVRKSIMRRSLRLGVDGVMSNNPDRVIKVLKEKEFADKFRLATYNDNPWEKFRG.

His5 is a catalytic residue. Glu25 and Asp27 together coordinate Mg(2+). His41 functions as the Nucleophile in the catalytic mechanism. 2 disulfide bridges follow: Cys45–Cys51 and Cys47–Cys190. Asp85 provides a ligand contact to Mg(2+).

This sequence belongs to the arthropod phospholipase D family. Class II subfamily. Requires Mg(2+) as cofactor. As to expression, expressed by the venom gland.

It localises to the secreted. The enzyme catalyses an N-(acyl)-sphingosylphosphocholine = an N-(acyl)-sphingosyl-1,3-cyclic phosphate + choline. The catalysed reaction is an N-(acyl)-sphingosylphosphoethanolamine = an N-(acyl)-sphingosyl-1,3-cyclic phosphate + ethanolamine. It carries out the reaction a 1-acyl-sn-glycero-3-phosphocholine = a 1-acyl-sn-glycero-2,3-cyclic phosphate + choline. It catalyses the reaction a 1-acyl-sn-glycero-3-phosphoethanolamine = a 1-acyl-sn-glycero-2,3-cyclic phosphate + ethanolamine. In terms of biological role, dermonecrotic toxins cleave the phosphodiester linkage between the phosphate and headgroup of certain phospholipids (sphingolipid and lysolipid substrates), forming an alcohol (often choline) and a cyclic phosphate. This toxin acts on sphingomyelin (SM). It may also act on ceramide phosphoethanolamine (CPE), lysophosphatidylcholine (LPC) and lysophosphatidylethanolamine (LPE), but not on lysophosphatidylserine (LPS), and lysophosphatidylglycerol (LPG). It acts by transphosphatidylation, releasing exclusively cyclic phosphate products as second products. Induces dermonecrosis, hemolysis, increased vascular permeability, edema, inflammatory response, and platelet aggregation. This Sicarius cf. damarensis (strain GJB-2008) (Six-eyed sand spider) protein is Dermonecrotic toxin SdSicTox-betaIIB1bi.